A 473-amino-acid chain; its full sequence is Arginine biosynthesis bifunctional protein ArgJ, mitochondrial (473 aa).

Thr-201, Lys-230, Thr-241, Glu-328, Asn-468, and Thr-473 together coordinate substrate. Residue Thr-241 is the Nucleophile of the active site.

This sequence belongs to the ArgJ family. As to quaternary structure, heterodimer of an alpha and a beta chain. In terms of processing, the alpha and beta chains are autoproteolytically processed from a single precursor protein within the mitochondrion.

It localises to the mitochondrion matrix. The enzyme catalyses N(2)-acetyl-L-ornithine + L-glutamate = N-acetyl-L-glutamate + L-ornithine. It carries out the reaction L-glutamate + acetyl-CoA = N-acetyl-L-glutamate + CoA + H(+). It functions in the pathway amino-acid biosynthesis; L-arginine biosynthesis; L-ornithine and N-acetyl-L-glutamate from L-glutamate and N(2)-acetyl-L-ornithine (cyclic): step 1/1. The protein operates within amino-acid biosynthesis; L-arginine biosynthesis; N(2)-acetyl-L-ornithine from L-glutamate: step 1/4. Functionally, catalyzes two activities which are involved in the cyclic version of arginine biosynthesis: the synthesis of acetylglutamate from glutamate and acetyl-CoA, and of ornithine by transacetylation between acetylornithine and glutamate. This chain is Arginine biosynthesis bifunctional protein ArgJ, mitochondrial, found in Ajellomyces capsulatus (strain G186AR / H82 / ATCC MYA-2454 / RMSCC 2432) (Darling's disease fungus).